Reading from the N-terminus, the 164-residue chain is Nucleotide-binding protein Helmi_22490 (164 aa).

This sequence belongs to the YajQ family.

Functionally, nucleotide-binding protein. This is Nucleotide-binding protein Helmi_22490 from Heliobacterium modesticaldum (strain ATCC 51547 / Ice1).